The following is a 291-amino-acid chain: Porphobilinogen deaminase (291 aa).

Cys233 is subject to S-(dipyrrolylmethanemethyl)cysteine.

Belongs to the HMBS family. Monomer. The cofactor is dipyrromethane.

The catalysed reaction is 4 porphobilinogen + H2O = hydroxymethylbilane + 4 NH4(+). Its pathway is porphyrin-containing compound metabolism; protoporphyrin-IX biosynthesis; coproporphyrinogen-III from 5-aminolevulinate: step 2/4. Functionally, tetrapolymerization of the monopyrrole PBG into the hydroxymethylbilane pre-uroporphyrinogen in several discrete steps. This Ruminiclostridium josui (Clostridium josui) protein is Porphobilinogen deaminase (hemC).